A 143-amino-acid chain; its full sequence is Small ribosomal subunit protein eS19x (143 aa).

This sequence belongs to the eukaryotic ribosomal protein eS19 family.

This Arabidopsis thaliana (Mouse-ear cress) protein is Small ribosomal subunit protein eS19x (RPS19C).